The primary structure comprises 264 residues: Thymidylate synthase (264 aa).

DUMP is bound at residue Arg21. His51 contacts (6R)-5,10-methylene-5,6,7,8-tetrahydrofolate. Position 126 to 127 (126 to 127 (RR)) interacts with dUMP. The active-site Nucleophile is Cys146. Residues 166-169 (RSCD), Asn177, and 207-209 (HLY) contribute to the dUMP site. Asp169 is a binding site for (6R)-5,10-methylene-5,6,7,8-tetrahydrofolate. Residue Ala263 coordinates (6R)-5,10-methylene-5,6,7,8-tetrahydrofolate.

It belongs to the thymidylate synthase family. Bacterial-type ThyA subfamily. As to quaternary structure, homodimer.

The protein resides in the cytoplasm. It carries out the reaction dUMP + (6R)-5,10-methylene-5,6,7,8-tetrahydrofolate = 7,8-dihydrofolate + dTMP. Its pathway is pyrimidine metabolism; dTTP biosynthesis. Catalyzes the reductive methylation of 2'-deoxyuridine-5'-monophosphate (dUMP) to 2'-deoxythymidine-5'-monophosphate (dTMP) while utilizing 5,10-methylenetetrahydrofolate (mTHF) as the methyl donor and reductant in the reaction, yielding dihydrofolate (DHF) as a by-product. This enzymatic reaction provides an intracellular de novo source of dTMP, an essential precursor for DNA biosynthesis. The chain is Thymidylate synthase from Salmonella typhimurium (strain LT2 / SGSC1412 / ATCC 700720).